Reading from the N-terminus, the 161-residue chain is uncharacterized protein (161 aa).

Positions 1-35 (MVMAMGFDTVVAAIMATAIIVAVAYTFLAGSTSIA) are cleaved as a signal peptide.

This is an uncharacterized protein from Archaeoglobus fulgidus (strain ATCC 49558 / DSM 4304 / JCM 9628 / NBRC 100126 / VC-16).